A 528-amino-acid chain; its full sequence is (R)-citramalate synthase (528 aa).

Residues 5 to 271 (VYIYDTTLRD…IPQENLKKLT (267 aa)) form the Pyruvate carboxyltransferase domain.

The protein belongs to the alpha-IPM synthase/homocitrate synthase family.

It carries out the reaction pyruvate + acetyl-CoA + H2O = (3R)-citramalate + CoA + H(+). It functions in the pathway amino-acid biosynthesis; L-isoleucine biosynthesis; 2-oxobutanoate from pyruvate: step 1/3. Catalyzes the condensation of pyruvate and acetyl-coenzyme A to form (R)-citramalate. The chain is (R)-citramalate synthase from Aquifex aeolicus (strain VF5).